Reading from the N-terminus, the 273-residue chain is Beta-lactamase OXA-23 (273 aa).

Positions 1-17 (MNKYFTCYVVASLFLSG) are cleaved as a signal peptide. Ser-79 serves as the catalytic Acyl-ester intermediate. A beta-lactam is bound by residues Ser-79, Lys-82, Ser-126, Thr-217, Trp-219, and Arg-259. Residue Lys-82 is modified to N6-carboxylysine.

This sequence belongs to the class-D beta-lactamase family. Monomer. Post-translationally, carboxylated on the epsilon-amino group of a lysine, with the resulting carbamate functional group serving as a general base. Probably N-carboxylated at Lys-82 at neutral pH in vivo and undergoes complete N-decarboxylation, at pH 4.1, in vitro.

The protein localises to the periplasm. The catalysed reaction is a beta-lactam + H2O = a substituted beta-amino acid. Inhibited by the desmethyl carbapenem, MA-1-206, via a covalent binding to Ser-79. Its function is as follows. Class D beta-lactamase which confers resistance to the beta-lactam antibiotics, including ampicillin, and carbapenems such as imipenem and meropenem. Acts via hydrolysis of the beta-lactam ring. Has penicillin-, cephalosporin- and carbapenem-hydrolyzing activities, but lacks ceftazidime-hydrolyzing activity. This is Beta-lactamase OXA-23 from Acinetobacter baumannii.